Here is a 336-residue protein sequence, read N- to C-terminus: DNA-directed RNA polymerase subunit alpha (336 aa).

Residues 1 to 232 are alpha N-terminal domain (alpha-NTD); sequence MIQKNWQELI…DQLSVFVNFD (232 aa). The interval 248–336 is alpha C-terminal domain (alpha-CTD); that stretch reads FNPALLKKVD…DLAKRYEDQY (89 aa).

The protein belongs to the RNA polymerase alpha chain family. In terms of assembly, homodimer. The RNAP catalytic core consists of 2 alpha, 1 beta, 1 beta' and 1 omega subunit. When a sigma factor is associated with the core the holoenzyme is formed, which can initiate transcription.

It catalyses the reaction RNA(n) + a ribonucleoside 5'-triphosphate = RNA(n+1) + diphosphate. In terms of biological role, DNA-dependent RNA polymerase catalyzes the transcription of DNA into RNA using the four ribonucleoside triphosphates as substrates. This chain is DNA-directed RNA polymerase subunit alpha, found in Sinorhizobium fredii (strain NBRC 101917 / NGR234).